Reading from the N-terminus, the 343-residue chain is Anthranilate phosphoribosyltransferase (343 aa).

5-phospho-alpha-D-ribose 1-diphosphate is bound by residues G81, 84-85 (GD), 91-94 (NVST), 109-117 (KHGNRSVSS), and S121. Residue G81 coordinates anthranilate. S93 contacts Mg(2+). Position 112 (N112) interacts with anthranilate. R167 contacts anthranilate. Mg(2+) is bound by residues D226 and E227.

This sequence belongs to the anthranilate phosphoribosyltransferase family. Homodimer. Requires Mg(2+) as cofactor.

It catalyses the reaction N-(5-phospho-beta-D-ribosyl)anthranilate + diphosphate = 5-phospho-alpha-D-ribose 1-diphosphate + anthranilate. It participates in amino-acid biosynthesis; L-tryptophan biosynthesis; L-tryptophan from chorismate: step 2/5. Its function is as follows. Catalyzes the transfer of the phosphoribosyl group of 5-phosphorylribose-1-pyrophosphate (PRPP) to anthranilate to yield N-(5'-phosphoribosyl)-anthranilate (PRA). This Chromohalobacter salexigens (strain ATCC BAA-138 / DSM 3043 / CIP 106854 / NCIMB 13768 / 1H11) protein is Anthranilate phosphoribosyltransferase.